We begin with the raw amino-acid sequence, 493 residues long: 3-octaprenyl-4-hydroxybenzoate carboxy-lyase (493 aa).

Residue Asn172 participates in Mn(2+) binding. Prenylated FMN-binding positions include 175-177, 189-191, and 194-195; these read IYR, RWL, and RG. Glu238 serves as a coordination point for Mn(2+). Asp287 serves as the catalytic Proton donor.

This sequence belongs to the UbiD family. In terms of assembly, homohexamer. Prenylated FMN serves as cofactor. Mn(2+) is required as a cofactor.

Its subcellular location is the cell membrane. It catalyses the reaction a 4-hydroxy-3-(all-trans-polyprenyl)benzoate + H(+) = a 2-(all-trans-polyprenyl)phenol + CO2. It participates in cofactor biosynthesis; ubiquinone biosynthesis. Its function is as follows. Catalyzes the decarboxylation of 3-octaprenyl-4-hydroxy benzoate to 2-octaprenylphenol, an intermediate step in ubiquinone biosynthesis. The sequence is that of 3-octaprenyl-4-hydroxybenzoate carboxy-lyase from Shewanella sp. (strain ANA-3).